Here is a 107-residue protein sequence, read N- to C-terminus: SOSS complex subunit C (107 aa).

Belongs to the SOSS-C family. Belongs to the multiprotein complex Integrator. Component of the SOSS complex, composed of soss-b (soss-b1/nabp2 or soss-b2/nabp1), soss-a/ints3 and soss-c/inip.

The protein localises to the nucleus. Functionally, component of the SOSS complex, a multiprotein complex that functions downstream of the MRN complex to promote DNA repair and G2/M checkpoint. The SOSS complex associates with single-stranded DNA at DNA lesions and influences diverse endpoints in the cellular DNA damage response including cell-cycle checkpoint activation, recombinational repair and maintenance of genomic stability. Required for efficient homologous recombination-dependent repair of double-strand breaks (DSBs). The protein is SOSS complex subunit C (inip) of Salmo salar (Atlantic salmon).